The chain runs to 1172 residues: Putative cadmium/zinc-transporting ATPase HMA4 (1172 aa).

At Met1–Lys93 the chain is on the cytoplasmic side. The 67-residue stretch at Gln17–Asn83 folds into the HMA domain. A helical transmembrane segment spans residues Asn94 to Phe115. Over Val116–Ser118 the chain is Extracellular. A helical membrane pass occupies residues Pro119–Lys138. The Cytoplasmic portion of the chain corresponds to Ala139–Arg145. A helical transmembrane segment spans residues Pro146 to Asp166. Phe167 is a topological domain (extracellular). Residues Met168 to Ser188 traverse the membrane as a helical segment. At Tyr189–Lys314 the chain is on the cytoplasmic side. The chain crosses the membrane as a helical span at residues Cys315–Met337. Topologically, residues Lys338–Trp345 are extracellular. A helical membrane pass occupies residues Phe346 to Leu363. Topologically, residues Ser364 to Val656 are cytoplasmic. Catalysis depends on Asp401, which acts as the 4-aspartylphosphate intermediate. Mg(2+) contacts are provided by Asp601 and Asp605. A helical membrane pass occupies residues Val657–Ala676. The Extracellular portion of the chain corresponds to Gly677–Leu680. Residues Ile681 to Met700 form a helical membrane-spanning segment. Residues Leu701–Ala1172 are Cytoplasmic-facing.

The protein belongs to the cation transport ATPase (P-type) (TC 3.A.3) family. Type IB subfamily.

It is found in the membrane. It catalyses the reaction Zn(2+)(in) + ATP + H2O = Zn(2+)(out) + ADP + phosphate + H(+). The enzyme catalyses Cd(2+)(in) + ATP + H2O = Cd(2+)(out) + ADP + phosphate + H(+). In terms of biological role, involved in cadmium/zinc transport. The chain is Putative cadmium/zinc-transporting ATPase HMA4 (HMA4) from Arabidopsis thaliana (Mouse-ear cress).